The following is a 461-amino-acid chain: Fumarate hydratase class II (461 aa).

Residues 97–99 (SGT), 127–130 (HPND), 137–139 (SSN), and threonine 185 contribute to the substrate site. Residue histidine 186 is the Proton donor/acceptor of the active site. Residue serine 316 is part of the active site. Residues serine 317 and 322 to 324 (KVN) each bind substrate.

The protein belongs to the class-II fumarase/aspartase family. Fumarase subfamily. Homotetramer.

It is found in the cytoplasm. The catalysed reaction is (S)-malate = fumarate + H2O. It functions in the pathway carbohydrate metabolism; tricarboxylic acid cycle; (S)-malate from fumarate: step 1/1. In terms of biological role, involved in the TCA cycle. Catalyzes the stereospecific interconversion of fumarate to L-malate. The sequence is that of Fumarate hydratase class II from Staphylococcus aureus (strain Mu50 / ATCC 700699).